Consider the following 372-residue polypeptide: DNA primase small subunit PriS (372 aa).

Catalysis depends on residues Asp95, Asp97, and Asp280.

It belongs to the eukaryotic-type primase small subunit family. Heterodimer of a small subunit (PriS) and a large subunit (PriL). The cofactor is Mg(2+). It depends on Mn(2+) as a cofactor.

In terms of biological role, catalytic subunit of DNA primase, an RNA polymerase that catalyzes the synthesis of short RNA molecules used as primers for DNA polymerase during DNA replication. The small subunit contains the primase catalytic core and has DNA synthesis activity on its own. Binding to the large subunit stabilizes and modulates the activity, increasing the rate of DNA synthesis while decreasing the length of the DNA fragments, and conferring RNA synthesis capability. The DNA polymerase activity may enable DNA primase to also catalyze primer extension after primer synthesis. May also play a role in DNA repair. The polypeptide is DNA primase small subunit PriS (Cenarchaeum symbiosum (strain A)).